The chain runs to 1086 residues: NAD(P) transhydrogenase, mitochondrial (1086 aa).

A mitochondrion-targeting transit peptide spans 1–43 (MANLLKTVVTGCSCPLLSNLGSCKGLRVKKDFLRTFYTHQELW). The Mitochondrial matrix portion of the chain corresponds to 44–474 (CKAPVKPGIP…TITPFRKTMS (431 aa)). K70 bears the N6-acetyllysine mark. N6-succinyllysine is present on K117. 182–184 (RVT) serves as a coordination point for NAD(+). Residue K224 is modified to N6-succinyllysine. NAD(+)-binding positions include V237, 257–259 (DTR), and G287. K294 carries the post-translational modification N6-succinyllysine. NAD(+) is bound by residues E300 and L319. K331 is subject to N6-succinyllysine. K397 is modified (N6-acetyllysine). 4 helical membrane passes run 475–493 (TASA…GIAA), 501–521 (MVTT…GVTP), 527–546 (LMSV…LALM), and 558–578 (GLAA…FLVT). Residues 579–595 (QRMLDMFKRPTDPPEYN) are Mitochondrial matrix-facing. Transmembrane regions (helical) follow at residues 596–616 (YLYL…LYSG), 622–642 (IMYL…STQG), 646–666 (LGNA…LGVL), 672–691 (LLAQ…LTIA), and 702–722 (LVAA…IAEY). Over 723 to 739 (IIEYPHFATDAAANLTK) the chain is Cytoplasmic. 5 helical membrane-spanning segments follow: residues 740–760 (IVAY…LIAY), 778–797 (HLLN…PFMV), 801–819 (FTTG…AVMG), 833–853 (VVIT…GFLL), and 857–879 (LLTI…MCVA). The Mitochondrial matrix segment spans residues 880 to 1086 (MNRSLANVIL…QAKVRESYQK (207 aa)). Residues Y933, 965–970 (VAGRMP), 1007–1011 (GANDT), 1026–1027 (GM), 1042–1049 (KRSLGVGY), and 1068–1069 (DA) contribute to the NADP(+) site. K1079 carries the N6-succinyllysine modification.

It in the N-terminal section; belongs to the AlaDH/PNT family. This sequence in the C-terminal section; belongs to the PNT beta subunit family. Homodimer. In terms of tissue distribution, widely expressed with expression most readily detectable in adrenal, heart, kidney, thyroid and adipose tissues.

The protein resides in the mitochondrion inner membrane. The enzyme catalyses NAD(+) + NADPH + H(+)(in) = NADH + NADP(+) + H(+)(out). Functionally, the transhydrogenation between NADH and NADP is coupled to respiration and ATP hydrolysis and functions as a proton pump across the membrane. May play a role in reactive oxygen species (ROS) detoxification in the adrenal gland. This chain is NAD(P) transhydrogenase, mitochondrial (NNT), found in Homo sapiens (Human).